We begin with the raw amino-acid sequence, 129 residues long: D-ribose pyranase 2 (129 aa).

The active-site Proton donor is the His20. Residues Asp28, His96, and 118–120 (YAN) each bind substrate.

It belongs to the RbsD / FucU family. RbsD subfamily. In terms of assembly, homodecamer.

The protein localises to the cytoplasm. It carries out the reaction beta-D-ribopyranose = beta-D-ribofuranose. Its pathway is carbohydrate metabolism; D-ribose degradation; D-ribose 5-phosphate from beta-D-ribopyranose: step 1/2. Its function is as follows. Catalyzes the interconversion of beta-pyran and beta-furan forms of D-ribose. This chain is D-ribose pyranase 2, found in Streptomyces griseus subsp. griseus (strain JCM 4626 / CBS 651.72 / NBRC 13350 / KCC S-0626 / ISP 5235).